The sequence spans 101 residues: NAD(P)H-quinone oxidoreductase subunit 4L, chloroplastic (101 aa).

Transmembrane regions (helical) follow at residues 2 to 22, 32 to 52, and 61 to 81; these read MFEY…YGLI, MCLE…SDLF, and IFSI…PAIV.

The protein belongs to the complex I subunit 4L family. NDH is composed of at least 16 different subunits, 5 of which are encoded in the nucleus.

The protein localises to the plastid. Its subcellular location is the chloroplast thylakoid membrane. The enzyme catalyses a plastoquinone + NADH + (n+1) H(+)(in) = a plastoquinol + NAD(+) + n H(+)(out). The catalysed reaction is a plastoquinone + NADPH + (n+1) H(+)(in) = a plastoquinol + NADP(+) + n H(+)(out). Its function is as follows. NDH shuttles electrons from NAD(P)H:plastoquinone, via FMN and iron-sulfur (Fe-S) centers, to quinones in the photosynthetic chain and possibly in a chloroplast respiratory chain. The immediate electron acceptor for the enzyme in this species is believed to be plastoquinone. Couples the redox reaction to proton translocation, and thus conserves the redox energy in a proton gradient. This chain is NAD(P)H-quinone oxidoreductase subunit 4L, chloroplastic, found in Amborella trichopoda.